A 1044-amino-acid chain; its full sequence is Isoleucine--tRNA ligase (1044 aa).

A 'HIGH' region motif is present at residues 49 to 59 (PYCSGRIHLGT). The 'KMSKS' region motif lies at 591–595 (KMSKS). Position 594 (K594) interacts with ATP.

It belongs to the class-I aminoacyl-tRNA synthetase family. IleS type 2 subfamily. In terms of assembly, monomer. The cofactor is Zn(2+).

The protein localises to the cytoplasm. It carries out the reaction tRNA(Ile) + L-isoleucine + ATP = L-isoleucyl-tRNA(Ile) + AMP + diphosphate. Catalyzes the attachment of isoleucine to tRNA(Ile). As IleRS can inadvertently accommodate and process structurally similar amino acids such as valine, to avoid such errors it has two additional distinct tRNA(Ile)-dependent editing activities. One activity is designated as 'pretransfer' editing and involves the hydrolysis of activated Val-AMP. The other activity is designated 'posttransfer' editing and involves deacylation of mischarged Val-tRNA(Ile). The chain is Isoleucine--tRNA ligase from Methanothermobacter thermautotrophicus (strain ATCC 29096 / DSM 1053 / JCM 10044 / NBRC 100330 / Delta H) (Methanobacterium thermoautotrophicum).